The following is a 258-amino-acid chain: Ribosomal RNA small subunit methyltransferase A (258 aa).

Positions 13, 15, 40, 61, 86, and 106 each coordinate S-adenosyl-L-methionine.

Belongs to the class I-like SAM-binding methyltransferase superfamily. rRNA adenine N(6)-methyltransferase family. RsmA subfamily.

The protein localises to the cytoplasm. The enzyme catalyses adenosine(1518)/adenosine(1519) in 16S rRNA + 4 S-adenosyl-L-methionine = N(6)-dimethyladenosine(1518)/N(6)-dimethyladenosine(1519) in 16S rRNA + 4 S-adenosyl-L-homocysteine + 4 H(+). Specifically dimethylates two adjacent adenosines (A1518 and A1519) in the loop of a conserved hairpin near the 3'-end of 16S rRNA in the 30S particle. May play a critical role in biogenesis of 30S subunits. The protein is Ribosomal RNA small subunit methyltransferase A of Coxiella burnetii (strain RSA 331 / Henzerling II).